A 631-amino-acid polypeptide reads, in one-letter code: Probable G-protein coupled receptor 153 (631 aa).

Residues 1 to 11 (MSDERRLPSSA) are Extracellular-facing. The helical transmembrane segment at 12–32 (VGWLACGGLSLLANAWGILSV) threads the bilayer. Over 33–41 (GAKQKKWKP) the chain is Cytoplasmic. Residues 42 to 62 (LEFLLCTLAATHMLNVAVPIA) traverse the membrane as a helical segment. At 63-84 (TYAVVQLRRQRPDYEWNEGLCK) the chain is on the extracellular side. The helical transmembrane segment at 85 to 105 (VFVSTFYTLTLATCFSVTSIS) threads the bilayer. The Cytoplasmic segment spans residues 106 to 126 (YHRMWMVRWPVNYRLSNAKKQ). A helical membrane pass occupies residues 127–147 (AVHTVMGIWMVSFILSALPAV). Over 148–162 (GWHDTSERFYTHGCR) the chain is Extracellular. The chain crosses the membrane as a helical span at residues 163-183 (FIVAEIGLGFGVCFLLLVGGS). At 184–243 (VAMGMVCTAIALFQTLATQVGHRADRRTFTVPTIVVEDAQGKRRSSIDGSEPARTSLQIT) the chain is on the cytoplasmic side. A helical transmembrane segment spans residues 244-264 (GLVATIVVIYDCLMGFPVLVV). The Extracellular portion of the chain corresponds to 265-276 (SFSSLRADASAP). The helical transmembrane segment at 277-297 (WMALCVLWCSVTQALLLPLFL) threads the bilayer. The Cytoplasmic portion of the chain corresponds to 298 to 631 (WTCDRYRADL…LHSDSLGSAS (334 aa)). 3 disordered regions span residues 486–518 (LQPSSLDGGPRHAQDSPPGSPRRRPGPGARSAS), 546–590 (QPFP…SLSA), and 603–631 (CGSISSFLSSPSESSGYVTLHSDSLGSAS). The segment covering 605-617 (SISSFLSSPSESS) has biased composition (low complexity).

The protein belongs to the G-protein coupled receptor 1 family.

Its subcellular location is the cell membrane. Its function is as follows. Orphan receptor. This Mus musculus (Mouse) protein is Probable G-protein coupled receptor 153 (Gpr153).